A 369-amino-acid chain; its full sequence is Glutamate 5-kinase (369 aa).

Residue K8 coordinates ATP. Positions 49, 136, and 148 each coordinate substrate. Residues 168 to 169 (TD) and 211 to 217 (TGGMATK) contribute to the ATP site. The region spanning 276–354 (TGKLYLDSGA…DEISQILGYG (79 aa)) is the PUA domain.

Belongs to the glutamate 5-kinase family.

It is found in the cytoplasm. The catalysed reaction is L-glutamate + ATP = L-glutamyl 5-phosphate + ADP. The protein operates within amino-acid biosynthesis; L-proline biosynthesis; L-glutamate 5-semialdehyde from L-glutamate: step 1/2. Its function is as follows. Catalyzes the transfer of a phosphate group to glutamate to form L-glutamate 5-phosphate. This Rippkaea orientalis (strain PCC 8801 / RF-1) (Cyanothece sp. (strain PCC 8801)) protein is Glutamate 5-kinase.